A 166-amino-acid polypeptide reads, in one-letter code: Phosphopantetheine adenylyltransferase (166 aa).

Thr-11 is a substrate binding site. Residues Thr-11–Phe-12 and His-19 contribute to the ATP site. Substrate is bound by residues Lys-43, Thr-79, and Arg-93. ATP contacts are provided by residues Glu-104 and Leu-128–Thr-134.

Belongs to the bacterial CoaD family. In terms of assembly, homohexamer. Mg(2+) serves as cofactor.

It localises to the cytoplasm. It catalyses the reaction (R)-4'-phosphopantetheine + ATP + H(+) = 3'-dephospho-CoA + diphosphate. It participates in cofactor biosynthesis; coenzyme A biosynthesis; CoA from (R)-pantothenate: step 4/5. Reversibly transfers an adenylyl group from ATP to 4'-phosphopantetheine, yielding dephospho-CoA (dPCoA) and pyrophosphate. The chain is Phosphopantetheine adenylyltransferase from Lactococcus lactis subsp. cremoris (strain MG1363).